Consider the following 499-residue polypeptide: MEEFQVYLELHKAHNFLYPLFFQEYIYALAHNHRLNRLNRSSLFQNGDYDNKFSSLIVKRLIFRMYQQNNFIISTKNLNQNTFFSHNKNLYYQIISVVLAVIVEIPFSIRFISSLEGKELVKSHNLQSIHSIFPFLEDKFSHLNYVLNVLIPHPIHLEILLQTLRYWIKDASSLHLLRFYLYEYSNLKNFFIPKKSTLNPRFFLFLYNSYVYQYESILFFLRKQSSHLQSNSFGILIERIYFYGKIESLLKVFIKKFQDILWLSKDPFMHYVRYRGKSILASKHGPLLISKWKYYFVNLWQCHFYVWSQSKRVHIKQLSKDYLNFLGYLSSLRLNFLVVRSQMLENSYLIDNVIKKFHTKIPMSSIIASLAKARFCNVLGHPISKSTWTDSSDSEILDRFVRIYRNLAHYYSGSSKKKNLYRIKYILRVSCVKTLARKHKSTVRAFLKRLGSDFLEEFLLEEEQVLSLMFSRVFSVSQRFYRVRIWYLDIFYINDFVNH.

The protein belongs to the intron maturase 2 family. MatK subfamily.

Its subcellular location is the plastid. It localises to the chloroplast. In terms of biological role, usually encoded in the trnK tRNA gene intron. Probably assists in splicing its own and other chloroplast group II introns. In Batis maritima (Maritime saltwort), this protein is Maturase K.